Here is a 540-residue protein sequence, read N- to C-terminus: Cytochrome P450 monooxygenase ptmG (540 aa).

N-linked (GlcNAc...) asparagine glycosylation is present at N17. The next 2 membrane-spanning stretches (helical) occupy residues 20 to 40 and 325 to 345; these read VMTL…YICI and AAFL…FLLL. Residue C474 participates in heme binding.

The protein belongs to the cytochrome P450 family. Heme is required as a cofactor.

The protein localises to the membrane. The protein operates within secondary metabolite biosynthesis. Functionally, cytochrome P450 monooxygenase; part of the gene cluster that mediates the biosynthesis of the indole diterpenes penitrems. The geranylgeranyl diphosphate (GGPP) synthase ptmG catalyzes the first step in penitrem biosynthesis via conversion of farnesyl pyrophosphate and isopentyl pyrophosphate into geranylgeranyl pyrophosphate (GGPP). Condensation of indole-3-glycerol phosphate with GGPP by the prenyl transferase ptmC then forms 3-geranylgeranylindole (3-GGI). Epoxidation by the FAD-dependent monooxygenase ptmM leads to a epoxidized-GGI that is substrate of the terpene cyclase ptmB for cyclization to yield paspaline. Paspaline is subsequently converted to 13-desoxypaxilline by the cytochrome P450 monooxygenase ptmP, the latter being then converted to paxilline by the cytochrome P450 monooxygenase ptmQ. Paxilline is converted to beta-paxitriol via C-10 ketoreduction by the short-chain dehydrogenase ptmH which can be monoprenylated at the C-20 by the indole diterpene prenyltransferase ptmD. A two-step elimination (acetylation and elimination) process performed by the O-acetyltransferase ptmV and ptmI leads to the production of the prenylated form of penijanthine. The FAD-linked oxidoreductase ptmO then converts the prenylated form of penijanthine into PC-M5 which is in turn transformed into PC-M4 by the aromatic dimethylallyltransferase ptmE. Five sequential oxidative transformations performed by the cytochrome P450 monooxygenases ptmK, ptmU, ptmL, ptmN and ptmJ yield the various penitrem compounds. PtmK, ptmU and ptmM are involved in the formation of the key bicyclic ring of penitrem C via the formation of the intermediates secopenitrem D and penitrem D. PtmL catalyzes the epoxidation of penitrem D and C to yield penitrem B and F, respectively. PtmJ catalyzes the last benzylic hydroxylation to convert penitrem B to prenitrem E and penitrem F to penitrem A. The polypeptide is Cytochrome P450 monooxygenase ptmG (Penicillium ochrochloron).